The following is a 390-amino-acid chain: UDP-galactose translocator (390 aa).

The tract at residues 1–24 (MAAVGVGGSTAAAGAGAVSSGALE) is disordered. Helical transmembrane passes span 3–23 (AVGV…SGAL), 37–57 (YISL…IRYA), 65–85 (FFAT…CLLL), 97–117 (LVLF…KLAV), 140–160 (TFQV…VLML), 169–189 (WASL…QAGG), 200–220 (GAGL…GVYF), 238–258 (LGLF…GTAV), 269–289 (PAVW…AVVV), and 315–335 (LFGF…IGAV). The segment covering 9–22 (STAAAGAGAVSSGA) has biased composition (low complexity). Positions 356 to 390 (PCIHQQPPGQPPPPQLSSRGDLTTEPFLPKSVLVK) are disordered.

It belongs to the nucleotide-sugar transporter family. SLC35A subfamily. Interacts with SLC35A3; the interaction is reduced in the presence of SLC35A4. Found in a complex with SLC35A3 and SLC35A4.

It is found in the golgi apparatus membrane. It catalyses the reaction UMP(out) + UDP-alpha-D-galactose(in) = UMP(in) + UDP-alpha-D-galactose(out). It carries out the reaction UDP-N-acetyl-alpha-D-galactosamine(in) + UMP(out) = UDP-N-acetyl-alpha-D-galactosamine(out) + UMP(in). The enzyme catalyses UMP(out) + UDP-alpha-D-glucose(in) = UMP(in) + UDP-alpha-D-glucose(out). The catalysed reaction is UMP(out) + UDP-N-acetyl-alpha-D-glucosamine(in) = UMP(in) + UDP-N-acetyl-alpha-D-glucosamine(out). It catalyses the reaction UDP-alpha-D-galactose(in) + AMP(out) = UDP-alpha-D-galactose(out) + AMP(in). It carries out the reaction UDP-alpha-D-galactose(in) + CMP(out) = UDP-alpha-D-galactose(out) + CMP(in). The enzyme catalyses UDP-N-acetyl-alpha-D-galactosamine(out) + UDP-alpha-D-galactose(in) = UDP-N-acetyl-alpha-D-galactosamine(in) + UDP-alpha-D-galactose(out). The catalysed reaction is UDP-N-acetyl-alpha-D-glucosamine(out) + UDP-alpha-D-galactose(in) = UDP-N-acetyl-alpha-D-glucosamine(in) + UDP-alpha-D-galactose(out). It catalyses the reaction UDP-alpha-D-galactose(in) + UDP-alpha-D-glucose(out) = UDP-alpha-D-galactose(out) + UDP-alpha-D-glucose(in). It carries out the reaction UMP(out) + CMP(in) = UMP(in) + CMP(out). The enzyme catalyses UMP(out) + AMP(in) = UMP(in) + AMP(out). Its function is as follows. Transports uridine diphosphate galactose (UDP-galactose) from the cytosol into the Golgi apparatus. It functions as an antiporter that exchanges UDP-galactose for UMP. It is also able to exchange UDP-galactose for AMP and CMP, and to transport UDP-N-acetylgalactosamine (UDP-GalNAc) and other nucleotide sugars. As a provider of UDP-galactose to galactosyltransferases present in the Golgi apparatus, it is necessary for globotriaosylceramide/globoside (Gb3Cer) synthesis from lactosylceramide. This is UDP-galactose translocator from Mus musculus (Mouse).